A 402-amino-acid polypeptide reads, in one-letter code: Galactoside 2-alpha-L-fucosyltransferase (402 aa).

Over Met1 to Asn6 the chain is Cytoplasmic. A helical; Signal-anchor for type II membrane protein transmembrane segment spans residues Tyr7–Ile27. The Lumenal segment spans residues Thr28–Tyr402. 3 N-linked (GlcNAc...) asparagine glycosylation sites follow: Asn119, Asn175, and Asn301.

It belongs to the glycosyltransferase 11 family. As to quaternary structure, may form oligomers. In terms of processing, N-glycosylated. Expression is restricted to pharyngeal neurons and gland cells.

The protein resides in the golgi apparatus. Its subcellular location is the golgi stack membrane. The protein operates within protein modification; protein glycosylation. Functionally, selectively catalyzes the addition of fucose in alpha 1-2 linkage to Gal-beta-(1-&gt;3)-GalNAc-alpha-R, Gal-beta-(1-&gt;3)-(GlcNAc-beta-(1-&gt;6))-GalNAc-alpha-R and Gal-beta-(1-&gt;3)-GalNAc acceptors but not Gal-beta-(1-&gt;3)-GlcNAc-beta-(1-&gt;3)-Gal-beta-(1-&gt;4)-Glc in vitro. This is Galactoside 2-alpha-L-fucosyltransferase from Caenorhabditis elegans.